The following is a 340-amino-acid chain: GTP 3',8-cyclase (340 aa).

The 227-residue stretch at 20–246 (RFERQYVYLR…PKALSDGPAK (227 aa)) folds into the Radical SAM core domain. Residue arginine 29 participates in GTP binding. [4Fe-4S] cluster is bound by residues cysteine 36 and cysteine 40. Residue tyrosine 42 coordinates S-adenosyl-L-methionine. Residue cysteine 43 coordinates [4Fe-4S] cluster. Residue arginine 79 participates in GTP binding. Residue glycine 83 participates in S-adenosyl-L-methionine binding. Position 110 (threonine 110) interacts with GTP. S-adenosyl-L-methionine is bound at residue serine 134. Lysine 171 is a GTP binding site. Methionine 205 serves as a coordination point for S-adenosyl-L-methionine. Residues cysteine 268 and cysteine 271 each coordinate [4Fe-4S] cluster. 273 to 275 (RLR) serves as a coordination point for GTP. Cysteine 285 is a binding site for [4Fe-4S] cluster.

The protein belongs to the radical SAM superfamily. MoaA family. Monomer and homodimer. It depends on [4Fe-4S] cluster as a cofactor.

The catalysed reaction is GTP + AH2 + S-adenosyl-L-methionine = (8S)-3',8-cyclo-7,8-dihydroguanosine 5'-triphosphate + 5'-deoxyadenosine + L-methionine + A + H(+). Its pathway is cofactor biosynthesis; molybdopterin biosynthesis. Catalyzes the cyclization of GTP to (8S)-3',8-cyclo-7,8-dihydroguanosine 5'-triphosphate. The chain is GTP 3',8-cyclase from Actinobacillus pleuropneumoniae serotype 3 (strain JL03).